The following is a 328-amino-acid chain: MIIQTPSRIHMGLIDLNGSIGRVDGGIGLALEEPNIKIEGKESDDISIEFDKKLIEKYGEDYIKSVRDRVYNTAIKVLDVIGGEGVDLKILSLFPAHSGLGSGTQLSLAVGKLISKIYNKEMNAYNIAKITGRGGTSGIGIGAFEYGGFLIDGGHSFGKGKDKEDFRPSSASKGVKPAPIIFRHDFDWETILIIPKGEHVYGKKEVDIFKKYCPVPLNEVEKICHLVLMKMMPAVVEKNLDDFGEVINKLQYLGFKKVELSLQSDIVKDLINELHKDVYAGLSSFGPTIYAFGDKKLIVEKANDIFDKYGVYGEIIITKANNVGHKIW.

The protein belongs to the beta-RFA-P synthase family. Homodimer. Mg(2+) is required as a cofactor.

The enzyme catalyses 5-phospho-alpha-D-ribose 1-diphosphate + 4-hydroxybenzoate + H(+) = 4-(beta-D-ribofuranosyl)phenol 5'-phosphate + CO2 + diphosphate. The catalysed reaction is 4-aminobenzoate + 5-phospho-alpha-D-ribose 1-diphosphate + H(+) = 4-(beta-D-ribofuranosyl)aminobenzene 5'-phosphate + CO2 + diphosphate. Its pathway is cofactor biosynthesis; 5,6,7,8-tetrahydromethanopterin biosynthesis. Functionally, catalyzes the condensation of 4-hydroxybenzoate (HB) with 5-phospho-alpha-D-ribose 1-diphosphate (PRPP) to produce beta-ribofuranosylphenol 5'-phosphate (beta-RFH-P). Also catalyzes the condensation of 4-aminobenzoate (pABA) with PRPP to produce beta-ribofuranosylaminobenzene 5'-phosphate (beta-RFA-P). Only 4-hydroxybenzoate is known to be biosynthesized by methanogenic archaea, but 4-aminobenzoate can be used as substrate by growing methanogens when it is present in the growth medium. The protein is Beta-ribofuranosylphenol 5'-phosphate synthase of Methanocaldococcus jannaschii (strain ATCC 43067 / DSM 2661 / JAL-1 / JCM 10045 / NBRC 100440) (Methanococcus jannaschii).